Here is a 311-residue protein sequence, read N- to C-terminus: DNA-directed RNA polymerase subunit alpha (311 aa).

The interval 1–226 is alpha N-terminal domain (alpha-NTD); it reads MIEFEKPNIT…EHLDLFTNLT (226 aa). The segment at 243–311 is alpha C-terminal domain (alpha-CTD); that stretch reads DDRILDRTIE…IDLGLGLKDK (69 aa).

It belongs to the RNA polymerase alpha chain family. As to quaternary structure, homodimer. The RNAP catalytic core consists of 2 alpha, 1 beta, 1 beta' and 1 omega subunit. When a sigma factor is associated with the core the holoenzyme is formed, which can initiate transcription.

It catalyses the reaction RNA(n) + a ribonucleoside 5'-triphosphate = RNA(n+1) + diphosphate. Its function is as follows. DNA-dependent RNA polymerase catalyzes the transcription of DNA into RNA using the four ribonucleoside triphosphates as substrates. The sequence is that of DNA-directed RNA polymerase subunit alpha from Streptococcus pneumoniae serotype 4 (strain ATCC BAA-334 / TIGR4).